A 130-amino-acid polypeptide reads, in one-letter code: MSKTIKRIGSRRNEHRVLKGVIYVQASFNNTIVTATDVRGQVISWSSAGACGFKGTRRGTPFAAQTAAENVIRTLMDRGIGRVEVMISGPGRGRDTALRTIRRSGILLSFVRDVTPMPHNGCRPPKKRRV.

It belongs to the universal ribosomal protein uS11 family. In terms of assembly, part of the 30S ribosomal subunit.

It localises to the plastid. The protein resides in the chloroplast. This Pinus koraiensis (Korean pine) protein is Small ribosomal subunit protein uS11c.